The sequence spans 389 residues: S-adenosylmethionine synthase (389 aa).

His15 contributes to the ATP binding site. Asp17 contributes to the Mg(2+) binding site. K(+) is bound at residue Glu43. Residues Glu56 and Gln99 each contribute to the L-methionine site. Residues 99-109 form a flexible loop region; sequence QSPDIAQGVNE. ATP contacts are provided by residues 166–168, 234–235, Asp243, 249–250, Ala266, and Lys270; these read DAK, RF, and RK. Asp243 is a binding site for L-methionine. Lys274 is a binding site for L-methionine.

The protein belongs to the AdoMet synthase family. Homotetramer; dimer of dimers. Mg(2+) serves as cofactor. The cofactor is K(+).

The protein localises to the cytoplasm. It catalyses the reaction L-methionine + ATP + H2O = S-adenosyl-L-methionine + phosphate + diphosphate. The protein operates within amino-acid biosynthesis; S-adenosyl-L-methionine biosynthesis; S-adenosyl-L-methionine from L-methionine: step 1/1. In terms of biological role, catalyzes the formation of S-adenosylmethionine (AdoMet) from methionine and ATP. The overall synthetic reaction is composed of two sequential steps, AdoMet formation and the subsequent tripolyphosphate hydrolysis which occurs prior to release of AdoMet from the enzyme. The polypeptide is S-adenosylmethionine synthase (Neisseria gonorrhoeae (strain ATCC 700825 / FA 1090)).